A 461-amino-acid polypeptide reads, in one-letter code: tRNA-2-methylthio-N(6)-dimethylallyladenosine synthase (461 aa).

In terms of domain architecture, MTTase N-terminal spans 25–143; sequence PTYSIITHGC…LPYLIDRHLS (119 aa). [4Fe-4S] cluster contacts are provided by Cys34, Cys70, Cys104, Cys179, Cys183, and Cys186. The Radical SAM core domain maps to 165 to 395; it reads RDNEYVGYVN…LDVAYPIFYE (231 aa). A TRAM domain is found at 398–461; sequence KSYLGTIQEV…SFALTGEMVD (64 aa).

The protein belongs to the methylthiotransferase family. MiaB subfamily. As to quaternary structure, monomer. It depends on [4Fe-4S] cluster as a cofactor.

It localises to the cytoplasm. It catalyses the reaction N(6)-dimethylallyladenosine(37) in tRNA + (sulfur carrier)-SH + AH2 + 2 S-adenosyl-L-methionine = 2-methylsulfanyl-N(6)-dimethylallyladenosine(37) in tRNA + (sulfur carrier)-H + 5'-deoxyadenosine + L-methionine + A + S-adenosyl-L-homocysteine + 2 H(+). Its function is as follows. Catalyzes the methylthiolation of N6-(dimethylallyl)adenosine (i(6)A), leading to the formation of 2-methylthio-N6-(dimethylallyl)adenosine (ms(2)i(6)A) at position 37 in tRNAs that read codons beginning with uridine. This Finegoldia magna (strain ATCC 29328 / DSM 20472 / WAL 2508) (Peptostreptococcus magnus) protein is tRNA-2-methylthio-N(6)-dimethylallyladenosine synthase.